The following is a 335-amino-acid chain: Flagellar P-ring protein (335 aa).

The signal sequence occupies residues 1–17; that stretch reads MNKPMLMLITFATSLLA.

It belongs to the FlgI family. As to quaternary structure, the basal body constitutes a major portion of the flagellar organelle and consists of four rings (L,P,S, and M) mounted on a central rod.

The protein resides in the periplasm. Its subcellular location is the bacterial flagellum basal body. In terms of biological role, assembles around the rod to form the L-ring and probably protects the motor/basal body from shearing forces during rotation. This Borreliella burgdorferi (strain ZS7) (Borrelia burgdorferi) protein is Flagellar P-ring protein.